Reading from the N-terminus, the 953-residue chain is Lysosomal alpha-glucosidase (953 aa).

An N-terminal signal peptide occupies residues 1–27 (MNIRKPLCSNSVVGACTLVSLTTAVIL). Residues 28–69 (GHLMLRELMLLPQDLHESSSGLWKTYRPHHQESYEPAPLHIQ) constitute a propeptide that is removed on maturation. The region spanning 80-131 (TQCDVTPNSRFDCAPDKGITQEQCEARGCCWVPAGQVLNGPVMGQPWCFFPP) is the P-type domain. Disulfide bonds link Cys-82/Cys-109, Cys-92/Cys-108, and Cys-103/Cys-127. N-linked (GlcNAc...) asparagine glycosylation is found at Asn-140, Asn-233, and Asn-390. Asp-404 is a binding site for substrate. Asn-470 carries N-linked (GlcNAc...) asparagine glycosylation. Asp-518 acts as the Nucleophile in catalysis. Glu-521 is an active-site residue. The cysteines at positions 533 and 558 are disulfide-linked. Arg-600 and Asp-616 together coordinate substrate. Residues Cys-647 and Cys-658 are joined by a disulfide bond. Asn-652 is a glycosylation site (N-linked (GlcNAc...) asparagine). Residue His-674 coordinates substrate. 2 N-linked (GlcNAc...) asparagine glycosylation sites follow: Asn-883 and Asn-926.

This sequence belongs to the glycosyl hydrolase 31 family.

The protein resides in the lysosome. It localises to the lysosome membrane. The enzyme catalyses Hydrolysis of terminal, non-reducing (1-&gt;4)-linked alpha-D-glucose residues with release of alpha-D-glucose.. Its function is as follows. Essential for the degradation of glycogen in lysosomes. Has highest activity on alpha-1,4-linked glycosidic linkages, but can also hydrolyze alpha-1,6-linked glucans. This Rattus norvegicus (Rat) protein is Lysosomal alpha-glucosidase (Gaa).